Consider the following 270-residue polypeptide: Shikimate dehydrogenase (NADP(+)) (270 aa).

Shikimate-binding positions include S15–S17 and T62. K66 (proton acceptor) is an active-site residue. The shikimate site is built by N87 and D102. NADP(+)-binding positions include G127–A131, N151–R156, and M214. Residue Y216 coordinates shikimate. G238 contributes to the NADP(+) binding site.

Belongs to the shikimate dehydrogenase family. In terms of assembly, homodimer.

It carries out the reaction shikimate + NADP(+) = 3-dehydroshikimate + NADPH + H(+). The protein operates within metabolic intermediate biosynthesis; chorismate biosynthesis; chorismate from D-erythrose 4-phosphate and phosphoenolpyruvate: step 4/7. Involved in the biosynthesis of the chorismate, which leads to the biosynthesis of aromatic amino acids. Catalyzes the reversible NADPH linked reduction of 3-dehydroshikimate (DHSA) to yield shikimate (SA). The chain is Shikimate dehydrogenase (NADP(+)) from Alkalilimnicola ehrlichii (strain ATCC BAA-1101 / DSM 17681 / MLHE-1).